We begin with the raw amino-acid sequence, 308 residues long: Cell division protein ZipA (308 aa).

The Periplasmic portion of the chain corresponds to 1–5; that stretch reads MQELR. A helical transmembrane segment spans residues 6–26; it reads LVLILVGALAIAALLFHGLWT. Over 27 to 308 the chain is Cytoplasmic; that stretch reads SRKETSSKFG…YKQRVKVFCN (282 aa). Residues 43–90 are disordered; that stretch reads FDSESEDEQPTPARGFEQPKESVVDVRQERKEPAFGRDEPNLSQDPLF. Basic and acidic residues predominate over residues 59–82; sequence EQPKESVVDVRQERKEPAFGRDEP.

This sequence belongs to the ZipA family. As to quaternary structure, interacts with FtsZ via their C-terminal domains.

The protein localises to the cell inner membrane. In terms of biological role, essential cell division protein that stabilizes the FtsZ protofilaments by cross-linking them and that serves as a cytoplasmic membrane anchor for the Z ring. Also required for the recruitment to the septal ring of downstream cell division proteins. In Aliivibrio salmonicida (strain LFI1238) (Vibrio salmonicida (strain LFI1238)), this protein is Cell division protein ZipA.